Reading from the N-terminus, the 568-residue chain is Matrix metalloproteinase-21 (568 aa).

The N-terminal stretch at 1 to 24 (MLAASVLRLTLPLCWLVAPQPTQP) is a signal peptide. Residues 25-143 (ERLFHSRDRS…SLGLRPRARQ (119 aa)) constitute a propeptide that is removed on maturation. The Cysteine switch motif lies at 110 to 117 (PRCGVPDT). 2 residues coordinate Zn(2+): C112 and H282. E283 is an active-site residue. Positions 286 and 292 each coordinate Zn(2+). A disulfide bond links C328 and C559. Hemopexin repeat units lie at residues 329-388 (KGSF…WRGI), 390-446 (TQSI…FPGI), 447-495 (PSPL…FPAI), and 502-558 (FRNL…WFDV). N-linked (GlcNAc...) asparagine glycosylation is present at N371.

It belongs to the peptidase M10A family. Zn(2+) is required as a cofactor. Ca(2+) serves as cofactor. The precursor is cleaved by a furin endopeptidase.

It localises to the secreted. Plays a specialized role in the generation of left-right asymmetry during embryogenesis. May act as a negative regulator of the NOTCH-signaling pathway. Cleaves alpha-1-antitrypsin. The polypeptide is Matrix metalloproteinase-21 (Mmp21) (Mus musculus (Mouse)).